The sequence spans 518 residues: Xylose import ATP-binding protein XylG (518 aa).

2 ABC transporter domains span residues 6 to 245 and 262 to 507; these read LQMN…VGRE and FEAR…LSHS. 38-45 provides a ligand contact to ATP; it reads GENGAGKS.

This sequence belongs to the ABC transporter superfamily. Xylose importer (TC 3.A.1.2.4) family. As to quaternary structure, the complex is composed of two ATP-binding proteins (XylG), two transmembrane proteins (XylH) and a solute-binding protein (XylF).

It localises to the cell inner membrane. The enzyme catalyses D-xylose(out) + ATP + H2O = D-xylose(in) + ADP + phosphate + H(+). Part of the ABC transporter complex XylFGH involved in xylose import. Responsible for energy coupling to the transport system. The chain is Xylose import ATP-binding protein XylG from Pseudomonas syringae pv. syringae (strain B728a).